Here is a 488-residue protein sequence, read N- to C-terminus: Cis-aconitate decarboxylase (488 aa).

It belongs to the PrpD family. In terms of assembly, homodimer. As to expression, expressed in LPS-tolerized macrophages (at protein level). Expressed in the luminal epithelial cells of pregnant uterus. Expressed in microglia and macrophage cells.

Its subcellular location is the mitochondrion. It catalyses the reaction cis-aconitate + H(+) = itaconate + CO2. In terms of biological role, cis-aconitate decarboxylase that catalyzes production of itaconate and is involved in the inhibition of the inflammatory response. Acts as a negative regulator of the Toll-like receptors (TLRs)-mediated inflammatory innate response by stimulating the tumor necrosis factor alpha-induced protein TNFAIP3 expression via reactive oxygen species (ROS) in LPS-tolerized macrophages. Involved in antimicrobial response of innate immune cells; ACOD1-mediated itaconic acid production contributes to the antimicrobial activity of macrophages by generating itaconate, leading to alkylation of proteins, such as TFEB. Involved in antiviral response following infection by flavivirus in neurons: ACOD1-mediated itaconate production inhibits the activity of succinate dehydrogenase, generating a metabolic state in neurons that suppresses replication of viral genomes. Plays a role in the embryo implantation. The polypeptide is Cis-aconitate decarboxylase (Mus musculus (Mouse)).